We begin with the raw amino-acid sequence, 71 residues long: SPI-2 type 3 secretion system needle filament protein (71 aa).

The protein belongs to the SctF family. As to quaternary structure, the core secretion machinery of the T3SS is composed of approximately 20 different proteins, including cytoplasmic components, a base, an export apparatus and a needle. This subunit polymerizes and forms the helical needle filament.

It localises to the secreted. It is found in the cell surface. Functionally, component of the type III secretion system (T3SS), also called injectisome, which is used to inject bacterial effector proteins into eukaryotic host cells. SsaG/SctF2 forms the external needle filament that protrudes from the bacterial surface. Its function is as follows. During infection, can induce innate immune responses. The needle proteins interact with host TLR2 or TLR4, and induce signaling by NF-kappa-B and/or AP-1. This activation is MyD88 dependent and results in increased expression of cytokines, including TNF-alpha, IL-6 and IL-8. The polypeptide is SPI-2 type 3 secretion system needle filament protein (Salmonella typhimurium (strain LT2 / SGSC1412 / ATCC 700720)).